A 177-amino-acid polypeptide reads, in one-letter code: Large ribosomal subunit protein uL6 (177 aa).

It belongs to the universal ribosomal protein uL6 family. As to quaternary structure, part of the 50S ribosomal subunit.

Its function is as follows. This protein binds to the 23S rRNA, and is important in its secondary structure. It is located near the subunit interface in the base of the L7/L12 stalk, and near the tRNA binding site of the peptidyltransferase center. In Sinorhizobium medicae (strain WSM419) (Ensifer medicae), this protein is Large ribosomal subunit protein uL6.